Consider the following 181-residue polypeptide: MAQDTNNLIWLDMEMTGLNPDQDRIIEVAMIVTDSNLNVLAESPVLVIHQPDAILDGMDDWNKNTHGKSGLIEKVKNSTVSEAEAEQLLLEFMMQHVPERATPMCGNTIHQDRRFMARWMPKLEAYFHYRNLDVSTLKELCKRWRPEIAKGVVKRGKHEALADILESIEEMRYYREHFLKV.

The Exonuclease domain maps to 8–171 (LIWLDMEMTG…ADILESIEEM (164 aa)). The active site involves Tyr-129.

Belongs to the oligoribonuclease family.

The protein localises to the cytoplasm. Functionally, 3'-to-5' exoribonuclease specific for small oligoribonucleotides. This is Oligoribonuclease from Chromobacterium violaceum (strain ATCC 12472 / DSM 30191 / JCM 1249 / CCUG 213 / NBRC 12614 / NCIMB 9131 / NCTC 9757 / MK).